The following is a 56-amino-acid chain: MSRLFTLVLIVLAMNVMMAIISDPVVEAVGCEECPMHCKGKNANPTCDDGVCNCNV.

An N-terminal signal peptide occupies residues 1–28; that stretch reads MSRLFTLVLIVLAMNVMMAIISDPVVEA. 3 disulfide bridges follow: Cys31–Cys47, Cys34–Cys52, and Cys38–Cys54.

Expressed by the venom gland.

It localises to the secreted. In terms of biological role, blocks small conductance calcium-activated potassium channels (KCNN, SK). Low toxicity by intracerebroventricular injection into mice. The protein is Potassium channel toxin alpha-KTx 9.2 of Olivierus martensii (Manchurian scorpion).